Consider the following 131-residue polypeptide: Large ribosomal subunit protein bL12 (131 aa).

It belongs to the bacterial ribosomal protein bL12 family. As to quaternary structure, homodimer. Part of the ribosomal stalk of the 50S ribosomal subunit. Forms a multimeric L10(L12)X complex, where L10 forms an elongated spine to which 2 to 4 L12 dimers bind in a sequential fashion. Binds GTP-bound translation factors.

In terms of biological role, forms part of the ribosomal stalk which helps the ribosome interact with GTP-bound translation factors. Is thus essential for accurate translation. The chain is Large ribosomal subunit protein bL12 from Prochlorococcus marinus (strain NATL2A).